Reading from the N-terminus, the 488-residue chain is MKYKDLRDFIRQLEAKGELVRISQPIDTDLEMTEIADRTLRAGGPALLFENPKNHDMPVLANLFGTPERVAMGMGQESVEALREVGKLLAYLKEPEPPKGLKDLWEKLPVFKQVLNMPAKVLKKAPCQEVVLTGDDVDLSKIPVQRCWPGDAAPLVTWGLSVTKGPHKKRQNLGIYRQQVIGKNKLIMRWLSHRGGALDFREWCQTHPGEPYPVSVALGADPATILGAVTPVPDTLSEYAFAGLLRGDKTEVVKSISNDLQVPASAEIVLEGYIAQDETAPEGPYGDHTGYYNEVDDFPVFTVTHITHRKDPIYHSTYTGRPPDEPAILGVALNEVFVPILQKQFPEIVDFYLPPEGCSYRMAVVTMKKQYPGHAKRVMMGVWSFLRQFMYTKFVIVCDDDVNARDWNDVIWAITTRMDPARDTVMIENTPIDYLDFASPVSGLGSKMGMDATNKMPGETDREWGVPIVMDEGVKKRVDDIWDSLGIM.

Asn-172 is a Mn(2+) binding site. Residues 175–177, 189–191, and 194–195 each bind prenylated FMN; these read IYR, RWL, and RG. Glu-238 provides a ligand contact to Mn(2+). The active-site Proton donor is Asp-287.

It belongs to the UbiD family. As to quaternary structure, homohexamer. Prenylated FMN serves as cofactor. It depends on Mn(2+) as a cofactor.

It is found in the cell membrane. The enzyme catalyses a 4-hydroxy-3-(all-trans-polyprenyl)benzoate + H(+) = a 2-(all-trans-polyprenyl)phenol + CO2. It functions in the pathway cofactor biosynthesis; ubiquinone biosynthesis. Its function is as follows. Catalyzes the decarboxylation of 3-octaprenyl-4-hydroxy benzoate to 2-octaprenylphenol, an intermediate step in ubiquinone biosynthesis. The sequence is that of 3-octaprenyl-4-hydroxybenzoate carboxy-lyase from Alteromonas mediterranea (strain DSM 17117 / CIP 110805 / LMG 28347 / Deep ecotype).